We begin with the raw amino-acid sequence, 261 residues long: Putative phosphite transport system permease protein HtxE (261 aa).

The region spanning E47–Q253 is the ABC transmembrane type-1 domain. 3 helical membrane passes run L122–A142, R203–G220, and M229–L249.

It belongs to the binding-protein-dependent transport system permease family.

It is found in the cell inner membrane. Its function is as follows. Probably forms part of a binding-protein-dependent hypophosphite transporter. The protein is Putative phosphite transport system permease protein HtxE (htxE) of Stutzerimonas stutzeri (Pseudomonas stutzeri).